The primary structure comprises 111 residues: MEQNKDPQMISKHSSRLPIWVLSPREEQQARKNLKTETYKKCANFVQAMADCAKANGMKVFPTCDKQRDEMKSCLLFYQTDEKYLDGERDKIVLEKINKLEKLCQKQSSTK.

Residues 39–82 (YKKCANFVQAMADCAKANGMKVFPTCDKQRDEMKSCLLFYQTDE) form the CHCH domain. 2 consecutive short sequence motifs (cx9C motif) follow at residues 42–52 (CANFVQAMADC) and 64–74 (CDKQRDEMKSC). Cystine bridges form between Cys-42–Cys-74 and Cys-52–Cys-64.

It belongs to the CMC family.

It is found in the mitochondrion inner membrane. Required for mitochondrial cytochrome c oxidase (COX) assembly and respiration. Binds copper. May be involved in copper trafficking and distribution to mitochondrial COX and SOD1. The protein is COX assembly mitochondrial protein (CMC1) of Saccharomyces cerevisiae (strain YJM789) (Baker's yeast).